We begin with the raw amino-acid sequence, 490 residues long: UDP-N-acetylmuramyl-tripeptide synthetase (490 aa).

An ATP-binding site is contributed by 113–119 (GTDGKTT). UDP-N-acetyl-alpha-D-muramoyl-L-alanyl-D-glutamate contacts are provided by residues 158 to 159 (TT), Ser185, and Arg193. Lys225 is subject to N6-carboxylysine.

The protein belongs to the MurCDEF family. MurE subfamily. Carboxylation is probably crucial for Mg(2+) binding and, consequently, for the gamma-phosphate positioning of ATP.

The protein resides in the cytoplasm. The protein operates within cell wall biogenesis; peptidoglycan biosynthesis. Its function is as follows. Catalyzes the addition of an amino acid to the nucleotide precursor UDP-N-acetylmuramoyl-L-alanyl-D-glutamate (UMAG) in the biosynthesis of bacterial cell-wall peptidoglycan. This chain is UDP-N-acetylmuramyl-tripeptide synthetase, found in Deinococcus radiodurans (strain ATCC 13939 / DSM 20539 / JCM 16871 / CCUG 27074 / LMG 4051 / NBRC 15346 / NCIMB 9279 / VKM B-1422 / R1).